Consider the following 557-residue polypeptide: Formate--tetrahydrofolate ligase (557 aa).

65–72 contacts ATP; that stretch reads TPAGEGKT.

It belongs to the formate--tetrahydrofolate ligase family.

The enzyme catalyses (6S)-5,6,7,8-tetrahydrofolate + formate + ATP = (6R)-10-formyltetrahydrofolate + ADP + phosphate. The protein operates within one-carbon metabolism; tetrahydrofolate interconversion. The polypeptide is Formate--tetrahydrofolate ligase (Methylorubrum populi (strain ATCC BAA-705 / NCIMB 13946 / BJ001) (Methylobacterium populi)).